The following is a 370-amino-acid chain: Nodulation protein Z (370 aa).

The region spanning 47 to 361 is the GT23 domain; it reads SSNDRFVVSR…NDPGRLILIE (315 aa).

Belongs to the glycosyltransferase 23 family.

Its function is as follows. Fucosyltransferase which adds the fucose moiety of the nod factor on its terminal reducing N-acetylglucosamine end. Uses GDP-fucose as the donor group. This chain is Nodulation protein Z (nodZ), found in Bradyrhizobium diazoefficiens (strain JCM 10833 / BCRC 13528 / IAM 13628 / NBRC 14792 / USDA 110).